Consider the following 89-residue polypeptide: MDVRFRLCLFLVILVIVANANVIKEPEKRFHPNLWRPPRCDWPHGVCSYIRDRCAPDTPFPCGPIFACPLPTNKCCCRRPYLPPWAGRR.

The first 20 residues, 1–20 (MDVRFRLCLFLVILVIVANA), serve as a signal peptide directing secretion. Residues 21–27 (NVIKEPE) constitute a propeptide that is removed on maturation.

Belongs to the Cnidaria small cysteine-rich protein (SCRiP) family. gamma subfamily. Post-translationally, contains 4 disulfide bonds.

It is found in the secreted. It localises to the nematocyst. Functionally, induces neurotoxic symptoms on zebrafish. Has also been claimed to be implied in calcification, but tests on homolog proteins suggest that proteins of this family have a neurotoxic function and not a calcification function. The polypeptide is Small cysteine-rich protein 1 (Acropora millepora (Staghorn coral)).